The primary structure comprises 486 residues: HTH-type transcriptional regulator PrpR (486 aa).

The 55-residue stretch at 22–76 (LRRLRQERGLTQVALAKALDLSTSYVNQLENDQRPITVPVLLLLTERFDLSAQYF) folds into the HTH cro/C1-type domain. A DNA-binding region (H-T-H motif) is located at residues 33-52 (QVALAKALDLSTSYVNQLEN).

The protein belongs to the short-chain fatty acyl-CoA assimilation regulator (ScfR) family.

It participates in organic acid metabolism; propanoate degradation. Its pathway is steroid metabolism; cholesterol metabolism. Its function is as follows. Plays a key role in regulating expression of enzymes involved in the catabolism of short chain fatty acids (SCFA) via both the glyoxylate (acetyl degradation route) and the methylcitrate cycle (propionate degradation route). Required for intracellular growth in macrophages and for the assimilation of cholesterol-derived propionate. PrpR acts as a transcriptional activator of prpDC and icl genes when propionate is the main carbon source, and as a ramB repressor. During growth on propionate, PrpR also acts as a transcriptional repressor of dnaA, which encodes the DnaA initiator protein responsible for initiating chromosomal replication. It is possibly involved in the regulation of genes responsible for controlling cholesterol utilization. The protein is HTH-type transcriptional regulator PrpR of Mycobacterium tuberculosis (strain ATCC 25618 / H37Rv).